The chain runs to 408 residues: NADH-quinone oxidoreductase subunit D (408 aa).

Belongs to the complex I 49 kDa subunit family. NDH-1 is composed of 14 different subunits. Subunits NuoB, C, D, E, F, and G constitute the peripheral sector of the complex.

It localises to the cell inner membrane. The catalysed reaction is a quinone + NADH + 5 H(+)(in) = a quinol + NAD(+) + 4 H(+)(out). In terms of biological role, NDH-1 shuttles electrons from NADH, via FMN and iron-sulfur (Fe-S) centers, to quinones in the respiratory chain. The immediate electron acceptor for the enzyme in this species is believed to be ubiquinone. Couples the redox reaction to proton translocation (for every two electrons transferred, four hydrogen ions are translocated across the cytoplasmic membrane), and thus conserves the redox energy in a proton gradient. The protein is NADH-quinone oxidoreductase subunit D of Campylobacter jejuni subsp. jejuni serotype O:23/36 (strain 81-176).